Reading from the N-terminus, the 216-residue chain is uncharacterized protein (216 aa).

An HTH cro/C1-type domain is found at 8-63; the sequence is LKTLMTSVHINASELARRTGIAQPIIHRLSTGQNTNPKLATIKPIARYFMVNISQL. A DNA-binding region (H-T-H motif) is located at residues 19–38; that stretch reads ASELARRTGIAQPIIHRLST.

This is an uncharacterized protein from Coxiella burnetii (strain RSA 493 / Nine Mile phase I).